Reading from the N-terminus, the 382-residue chain is MKITRLHTYRVAPRWMFLKIETDEGISGWGEPVIEGRARTVEAAVHEFGETLIGKDPARINDLWQTMYRSNFYRGGAILMSAIAGIDQALWDIKGKALGVPVYELLGGRVRDRMKVYSWVGGDRPADIVQDMQRLLEGGIDTFKLNGCEEMALLDSPRAVDAAVAKVAAVRDALDMRVDFGLDFHGRVAAPMAKPLLRALEPLRPLFVEEPVLAEQAEHYPRLAASTSIPLAAGERMYSRFEFKRVLEEGGLAILQPDLSHAGGITECHKIAAMAEAYDVAFAPHCPLGPVALAACLQVDFVAHNAVLQEQSMGIHYNRGAELLDYVINKDDFRIDAGFIRALPKPGLGVEVDEERIVHASRNPPDWRNPVWRHADGSVAEW.

Asp-183 provides a ligand contact to Mg(2+). The Proton donor role is filled by His-185. Mg(2+) is bound by residues Glu-209 and Glu-235. His-285 functions as the Proton acceptor in the catalytic mechanism.

The protein belongs to the mandelate racemase/muconate lactonizing enzyme family. GalD subfamily. The cofactor is Mg(2+).

It carries out the reaction D-galactonate = 2-dehydro-3-deoxy-D-galactonate + H2O. Its pathway is carbohydrate acid metabolism; D-galactonate degradation; D-glyceraldehyde 3-phosphate and pyruvate from D-galactonate: step 1/3. Functionally, catalyzes the dehydration of D-galactonate to 2-keto-3-deoxy-D-galactonate. The sequence is that of D-galactonate dehydratase from Variovorax paradoxus (strain S110).